Reading from the N-terminus, the 314-residue chain is Small ribosomal subunit protein uS2 (314 aa).

Composition is skewed to basic and acidic residues over residues 244-265 (GGHD…GHKD) and 271-287 (DRRG…EDRA). The segment at 244–314 (GGHDERREQE…AAPEAAPAKE (71 aa)) is disordered. Low complexity predominate over residues 302–314 (APAAAPEAAPAKE).

Belongs to the universal ribosomal protein uS2 family.

This chain is Small ribosomal subunit protein uS2, found in Anaeromyxobacter dehalogenans (strain 2CP-C).